We begin with the raw amino-acid sequence, 335 residues long: MKFNTIFLVLSIVKFILISAQSCPFSQSIINGASATFYTAIDAGNCGFEKLNGPLGPGNYMIAALGSKLYQNGAQCGQCFKISNSKNASVTVMATDSCHDAGYCQRDNHFDLSPAAFSILGPQSQGVLDGLSYVKVPCEVSGNVKIMMKDGSNDFWTSFFVFNSKVIIKQVSIKLSNSNQFVPLSQTTYNYWPTSITGGQFHVRIESIGGEFIYVTIPKVESRKVYETSGQFSTSCSNLNENNPINYKPQTFNSQQTSNNQNSNTQTPTKQPSPNSQNFIPSYCQQYIQKPNYIFAKESKEMLVLNENENIESNSLKLLPNFLLLILIILLNINF.

A signal peptide spans 1–20; that stretch reads MKFNTIFLVLSIVKFILISA. Topologically, residues 21–314 are extracellular; that stretch reads QSCPFSQSII…LNENENIESN (294 aa). Positions 43 to 143 constitute an Expansin-like EG45 domain; the sequence is AGNCGFEKLN…VKVPCEVSGN (101 aa). 2 disulfides stabilise this stretch: Cys46-Cys76 and Cys79-Cys138. The N-linked (GlcNAc...) asparagine glycan is linked to Asn87. The segment at 247 to 276 is disordered; that stretch reads YKPQTFNSQQTSNNQNSNTQTPTKQPSPNS. The span at 249–272 shows a compositional bias: low complexity; it reads PQTFNSQQTSNNQNSNTQTPTKQP. A helical membrane pass occupies residues 315–335; the sequence is SLKLLPNFLLLILIILLNINF.

This sequence belongs to the expansin family. Expansin A subfamily.

It is found in the membrane. In terms of biological role, may serve to lubricate the movement of the cellulose microfibrils during cell growth and wall extension and/or may serve to maintain the fluid state of the slug cell wall. In Dictyostelium discoideum (Social amoeba), this protein is Expansin-like protein 3 (expl3).